We begin with the raw amino-acid sequence, 142 residues long: Large ribosomal subunit protein uL11 (142 aa).

Belongs to the universal ribosomal protein uL11 family. Part of the ribosomal stalk of the 50S ribosomal subunit. Interacts with L10 and the large rRNA to form the base of the stalk. L10 forms an elongated spine to which L12 dimers bind in a sequential fashion forming a multimeric L10(L12)X complex. Post-translationally, one or more lysine residues are methylated.

In terms of biological role, forms part of the ribosomal stalk which helps the ribosome interact with GTP-bound translation factors. This is Large ribosomal subunit protein uL11 from Desulforudis audaxviator (strain MP104C).